Reading from the N-terminus, the 344-residue chain is Hydrophobic dipeptide epimerase (344 aa).

Substrate contacts are provided by residues Thr126 and 151 to 153 (KIK). Mg(2+)-binding residues include Asp184, Glu210, and Asp235. Substrate-binding positions include Lys257 and 307-309 (DLD).

The protein belongs to the mandelate racemase/muconate lactonizing enzyme family. Requires Mg(2+) as cofactor.

Dipeptide epimerase with a preference for hydrophobic substrates. Catalyzes the epimerization of L-Ala-L-Thr, L-Ala-L-Met, L-Ala-L-His, L-Ala-L-Phe, L-Ala-L-Tyr, L-Ala-L-Trp, L-Ile-L-Ala, L-Ile-L-Ser, L-Ile-L-Met, L-Ile-L-His, L-Ile-L-Phe, L-Ile-L-Tyr, L-Ile-L-Trp, L-Phe-L-Met, L-Phe-L-His, L-Phe-L-Phe, L-Phe-L-Tyr, L-Phe-L-Trp, L-Phe-L-Ser, L-Phe-L-Thr and L-Phe-L-Lys (in vitro). The chain is Hydrophobic dipeptide epimerase from Roseobacter litoralis (strain ATCC 49566 / DSM 6996 / JCM 21268 / NBRC 15278 / OCh 149).